A 193-amino-acid chain; its full sequence is DNA damage-inducible transcript 4-like protein (193 aa).

Belongs to the DDIT4 family.

The protein localises to the cytoplasm. Its function is as follows. Inhibits cell growth by regulating the TOR signaling pathway upstream of the TSC1-TSC2 complex and downstream of AKT1. The polypeptide is DNA damage-inducible transcript 4-like protein (DDIT4L) (Pongo abelii (Sumatran orangutan)).